The following is a 319-amino-acid chain: Class I histocompatibility antigen, Non-RT1.A alpha-1 chain (319 aa).

The first 24 residues, 1-24, serve as a signal peptide directing secretion; the sequence is MGAMAPRTLLLLLAAVLAPTQTWA. The segment at 25–114 is alpha-1; that stretch reads GSHSLRYFHT…LLSYYNQSEG (90 aa). Topologically, residues 25–307 are extracellular; sequence GSHSLRYFHT…WEPSPSTDSN (283 aa). Asn-110 is a glycosylation site (N-linked (GlcNAc...) asparagine). An alpha-2 region spans residues 115-206; it reads GSHTIQRMYG…ERGKETLLRS (92 aa). 2 disulfide bridges follow: Cys-125–Cys-188 and Cys-227–Cys-283. Residues 207–298 are alpha-3; that stretch reads DPPEAHVTLH…GLPEPLSQRW (92 aa). Positions 209 to 295 constitute an Ig-like C1-type domain; the sequence is PEAHVTLHPR…EHEGLPEPLS (87 aa). A glycan (N-linked (GlcNAc...) asparagine) is linked at Asn-280. A connecting peptide region spans residues 299-307; it reads EPSPSTDSN. The helical transmembrane segment at 308–319 threads the bilayer; it reads LLLLFLELWQFL.

It belongs to the MHC class I family. In terms of assembly, heterodimer of an alpha chain and a beta chain (beta-2-microglobulin).

The protein resides in the membrane. Involved in the presentation of foreign antigens to the immune system. In Rattus norvegicus (Rat), this protein is Class I histocompatibility antigen, Non-RT1.A alpha-1 chain (RT1-Aw2).